A 492-amino-acid polypeptide reads, in one-letter code: MKLLLLHPAFQSCLLLTLLGLWRTTPEAHASSLGAPAISAASFLQDLIHRYGEGDSLTLQQLKALLNHLDVGVGRGNVTQHVQGHRNLSTCFSSGDLFTAHNFSEQSRIGSSELQEFCPTILQQLDSRACTSENQENEENEQTEEGRPSAVEVWGYGLLCVTVISLCSLLGASVVPFMKKTFYKRLLLYFIALAIGTLYSNALFQLIPEAFGFNPLEDYYVSKSAVVFGGFYLFFFTEKILKILLKQKNEHHHGHSHYASESLPSKKDQEEGVMEKLQNGDLDHMIPQHCSSELDGKAPMVDEKVIVGSLSVQDLQASQSACYWLKGVRYSDIGTLAWMITLSDGLHNFIDGLAIGASFTVSVFQGISTSVAILCEEFPHELGDFVILLNAGMSIQQALFFNFLSACCCYLGLAFGILAGSHFSANWIFALAGGMFLYISLADMFPEMNEVCQEDERKGSILIPFIIQNLGLLTGFTIMVVLTMYSGQIQIG.

An N-terminal signal peptide occupies residues 1–30 (MKLLLLHPAFQSCLLLTLLGLWRTTPEAHA). The Extracellular segment spans residues 31–157 (SSLGAPAISA…PSAVEVWGYG (127 aa)). N-linked (GlcNAc...) asparagine glycosylation is found at Asn77, Asn87, and Asn102. Residues 158 to 178 (LLCVTVISLCSLLGASVVPFM) form a helical membrane-spanning segment. Topologically, residues 179–186 (KKTFYKRL) are cytoplasmic. Residues 187–207 (LLYFIALAIGTLYSNALFQLI) traverse the membrane as a helical segment. Over 208-224 (PEAFGFNPLEDYYVSKS) the chain is Extracellular. The helical transmembrane segment at 225–245 (AVVFGGFYLFFFTEKILKILL) threads the bilayer. Topologically, residues 246–397 (KQKNEHHHGH…LLNAGMSIQQ (152 aa)) are cytoplasmic. Residues 251-258 (HHHGHSHY) carry the HHHGHXHX-motif motif. Positions 376-381 (EEFPHE) match the XEXPHE-motif motif. Residues 398–418 (ALFFNFLSACCCYLGLAFGIL) form a helical membrane-spanning segment. The Extracellular portion of the chain corresponds to 419–424 (AGSHFS). The chain crosses the membrane as a helical span at residues 425-445 (ANWIFALAGGMFLYISLADMF). Residues 446–460 (PEMNEVCQEDERKGS) are Cytoplasmic-facing. Residues 461–481 (ILIPFIIQNLGLLTGFTIMVV) traverse the membrane as a helical segment. Topologically, residues 482-492 (LTMYSGQIQIG) are extracellular.

This sequence belongs to the ZIP transporter (TC 2.A.5) family. Homotrimer. In terms of processing, ubiquitinated. Ubiquitination occurs upon iron depletion. The ubiquitinated form undergoes proteasomal degradation. N-glycosylated. N-glycosylation at Asn-102 is required for iron-regulated extraction of the transporter from membranes and subsequent proteasomal degradation. In terms of tissue distribution, ubiquitously expressed, with higher expression in liver, pancreas, fetal liver, thyroid gland, left and right ventricle, right atrium and fetal heart. Weakly expressed in spleen, thymus, and peripheral blood leukocytes. Expressed in liver and in brain by large neurons in the globus pallidus, the insular cortex and the dentate nucleus and to a lower extent in the putamen and the caudate nucleus (at protein level). Expressed in osteoblasts and giant osteoclast-like cells, but not in osteocytes found osteoblastoma and giant cell tumors (at protein level). Expressed by microvascular capillary endothelial cells that constitute the blood-brain barrier (at protein level). Expressed by macrophages. Widely expressed but not detected in brain, heart, skeletal muscle, placenta and fetal skin.

Its subcellular location is the cell membrane. It localises to the apical cell membrane. The protein localises to the basolateral cell membrane. The protein resides in the early endosome membrane. It is found in the late endosome membrane. Its subcellular location is the lysosome membrane. It catalyses the reaction Zn(2+)(out) + 2 hydrogencarbonate(out) = Zn(2+)(in) + 2 hydrogencarbonate(in). The catalysed reaction is Mn(2+)(out) + 2 hydrogencarbonate(out) = Mn(2+)(in) + 2 hydrogencarbonate(in). It carries out the reaction Fe(2+)(out) + 2 hydrogencarbonate(out) = Fe(2+)(in) + 2 hydrogencarbonate(in). The enzyme catalyses Cd(2+)(out) + 2 hydrogencarbonate(out) = Cd(2+)(in) + 2 hydrogencarbonate(in). Its function is as follows. Electroneutral transporter of the plasma membrane mediating the cellular uptake of the divalent metal cations zinc, manganese and iron that are important for tissue homeostasis, metabolism, development and immunity. Functions as an energy-dependent symporter, transporting through the membranes an electroneutral complex composed of a divalent metal cation and two bicarbonate anions. Beside these endogenous cellular substrates, can also import cadmium a non-essential metal which is cytotoxic and carcinogenic. Controls the cellular uptake by the intestinal epithelium of systemic zinc, which is in turn required to maintain tight junctions and the intestinal permeability. Modifies the activity of zinc-dependent phosphodiesterases, thereby indirectly regulating G protein-coupled receptor signaling pathways important for gluconeogenesis and chondrocyte differentiation. Regulates insulin receptor signaling, glucose uptake, glycogen synthesis and gluconeogenesis in hepatocytes through the zinc-dependent intracellular catabolism of insulin. Through zinc cellular uptake also plays a role in the adaptation of cells to endoplasmic reticulum stress. Major manganese transporter of the basolateral membrane of intestinal epithelial cells, it plays a central role in manganese systemic homeostasis through intestinal manganese uptake. Also involved in manganese extracellular uptake by cells of the blood-brain barrier. May also play a role in manganese and zinc homeostasis participating in their elimination from the blood through the hepatobiliary excretion. Also functions in the extracellular uptake of free iron. May also function intracellularly and mediate the transport from endosomes to cytosol of iron endocytosed by transferrin. Plays a role in innate immunity by regulating the expression of cytokines by activated macrophages. The sequence is that of Metal cation symporter ZIP14 from Homo sapiens (Human).